Consider the following 237-residue polypeptide: Probable transcriptional regulatory protein WS1016 (237 aa).

Belongs to the TACO1 family.

Its subcellular location is the cytoplasm. The chain is Probable transcriptional regulatory protein WS1016 from Wolinella succinogenes (strain ATCC 29543 / DSM 1740 / CCUG 13145 / JCM 31913 / LMG 7466 / NCTC 11488 / FDC 602W) (Vibrio succinogenes).